Reading from the N-terminus, the 397-residue chain is Ribosomal RNA large subunit methyltransferase I (397 aa).

In terms of domain architecture, PUA spans 2-79 (SASIYLVKGR…KEETVDLDFF (78 aa)).

The protein belongs to the methyltransferase superfamily. RlmI family.

It localises to the cytoplasm. The catalysed reaction is cytidine(1962) in 23S rRNA + S-adenosyl-L-methionine = 5-methylcytidine(1962) in 23S rRNA + S-adenosyl-L-homocysteine + H(+). Specifically methylates the cytosine at position 1962 (m5C1962) of 23S rRNA. The polypeptide is Ribosomal RNA large subunit methyltransferase I (Aeromonas hydrophila subsp. hydrophila (strain ATCC 7966 / DSM 30187 / BCRC 13018 / CCUG 14551 / JCM 1027 / KCTC 2358 / NCIMB 9240 / NCTC 8049)).